Consider the following 537-residue polypeptide: Efflux pump ustT (537 aa).

The span at 1–25 shows a compositional bias: basic and acidic residues; the sequence is MAKEAQSLHELDNMKEKEVDQEKKA. A disordered region spans residues 1–50; sequence MAKEAQSLHELDNMKEKEVDQEKKAPTSVGDQEEHDDPKKQASHSQNVSE. An N-linked (GlcNAc...) asparagine glycan is attached at Asn-47. Transmembrane regions (helical) follow at residues 71–91, 104–124, 137–157, 162–182, 193–213, 236–256, 266–286, and 304–324; these read PLAM…VSLL, WVYM…AGAM, GIGL…NAPL, MFLG…PLIG, WCFI…FFFV, LGSA…QWAG, IILL…SQML, and FGSF…TYWI. N-linked (GlcNAc...) asparagine glycosylation is present at Asn-333. Helical transmembrane passes span 339 to 359, 363 to 383, 397 to 417, and 430 to 450; these read AGIR…MGGG, LIGY…VGAG, WIGY…QASL, and TAIS…VCIG. N-linked (GlcNAc...) asparagine glycosylation is present at Asn-501. The helical transmembrane segment at 507 to 527 threads the bilayer; sequence TFYVALAAGITSMLSAFLVQW.

It belongs to the major facilitator superfamily. TCR/Tet family.

It localises to the cell membrane. Functionally, efflux pump; part of the gene cluster that mediates the biosynthesis of ustilaginoidins, dimeric gamma-naphthopyrones isolated from different fungal species. The polypeptide is Efflux pump ustT (Ustilaginoidea virens (Rice false smut fungus)).